The following is an 87-amino-acid chain: Neurotoxin Cex1 (87 aa).

The signal sequence occupies residues 1-19 (MNSLLMITTCLVLFGTVWA). In terms of domain architecture, LCN-type CS-alpha/beta spans 20–85 (KEGYLVSKST…TYPIPGKSCG (66 aa)). 4 disulfide bridges follow: Cys-31/Cys-84, Cys-35/Cys-60, Cys-44/Cys-65, and Cys-48/Cys-67. A Cysteine amide modification is found at Cys-84. Residues 85-87 (GKK) constitute a propeptide that is removed on maturation.

It belongs to the long (4 C-C) scorpion toxin superfamily. Sodium channel inhibitor family. Beta subfamily. As to expression, expressed by the venom gland.

The protein localises to the secreted. Beta toxins bind voltage-independently at site-4 of sodium channels (Nav) and shift the voltage of activation toward more negative potentials thereby affecting sodium channel activation and promoting spontaneous and repetitive firing. This chain is Neurotoxin Cex1, found in Centruroides exilicauda (Bark scorpion).